The sequence spans 327 residues: Interleukin-12 subunit beta (327 aa).

The first 22 residues, 1–22 (MHPQQLVVSWFSLVLLASPIVA), serve as a signal peptide directing secretion. The 84-residue stretch at 23–106 (MWELEKNVYV…LSRSLLLLHK (84 aa)) folds into the Ig-like C2-type domain. Cys-50 and Cys-90 form a disulfide bridge. The N-linked (GlcNAc...) asparagine glycan is linked to Asn-223. The Fibronectin type-III domain maps to 238–327 (PPKNLQLRPL…WSEWASVSCS (90 aa)).

Belongs to the IL-12B family. Heterodimer with IL12A; disulfide-linked. The heterodimer is known as interleukin IL-12. Heterodimer with IL23A; disulfide-linked. The heterodimer is known as interleukin IL-23. Also secreted as a monomer. Interacts with NBR1; this interaction promotes IL-12 secretion.

It localises to the secreted. Functionally, cytokine that can act as a growth factor for activated T and NK cells, enhance the lytic activity of NK/lymphokine-activated killer cells, and stimulate the production of IFN-gamma by resting PBMC. In terms of biological role, associates with IL23A to form the IL-23 interleukin, a heterodimeric cytokine which functions in innate and adaptive immunity. IL-23 may constitute with IL-17 an acute response to infection in peripheral tissues. IL-23 binds to a heterodimeric receptor complex composed of IL12RB1 and IL23R, activates the Jak-Stat signaling cascade, stimulates memory rather than naive T-cells and promotes production of pro-inflammatory cytokines. IL-23 induces autoimmune inflammation and thus may be responsible for autoimmune inflammatory diseases and may be important for tumorigenesis. The chain is Interleukin-12 subunit beta (IL12B) from Bos taurus (Bovine).